Here is a 226-residue protein sequence, read N- to C-terminus: Exopolysaccharide production protein ExoY (226 aa).

The chain crosses the membrane as a helical span at residues 34 to 54 (VLAASVALLLFSPLFLLIMAL).

The protein belongs to the bacterial sugar transferase family.

Its subcellular location is the cell membrane. The protein operates within glycan metabolism; exopolysaccharide biosynthesis. Its function is as follows. Needed for the addition of the first sugar (galactose) to the isoprenoid carrier. May function as a sugar transferase. This Rhizobium meliloti (strain 1021) (Ensifer meliloti) protein is Exopolysaccharide production protein ExoY (exoY).